A 334-amino-acid polypeptide reads, in one-letter code: N-acetyl-gamma-glutamyl-phosphate reductase (334 aa).

C149 is an active-site residue.

The protein belongs to the NAGSA dehydrogenase family. Type 1 subfamily.

It localises to the cytoplasm. The enzyme catalyses N-acetyl-L-glutamate 5-semialdehyde + phosphate + NADP(+) = N-acetyl-L-glutamyl 5-phosphate + NADPH + H(+). It functions in the pathway amino-acid biosynthesis; L-arginine biosynthesis; N(2)-acetyl-L-ornithine from L-glutamate: step 3/4. Catalyzes the NADPH-dependent reduction of N-acetyl-5-glutamyl phosphate to yield N-acetyl-L-glutamate 5-semialdehyde. This is N-acetyl-gamma-glutamyl-phosphate reductase from Sulfurimonas denitrificans (strain ATCC 33889 / DSM 1251) (Thiomicrospira denitrificans (strain ATCC 33889 / DSM 1251)).